The primary structure comprises 958 residues: Structure-specific endonuclease subunit SLX4 (958 aa).

6 disordered regions span residues 89–123 (AESPIKSGVEGPTLPLGGDKKKPRTAGARKKKGKT), 183–209 (QKKAETVSRHFTPHTSAPPELVAGPID), 326–400 (LATA…LSPT), 531–589 (DLTI…EQHQ), 594–613 (QSNTPQQPQPAPPPPPSFEL), and 655–849 (STAA…SPPA). Residues 109–121 (KKPRTAGARKKKG) show a composition bias toward basic residues. Residues 332–341 (RRPEEAERST) show a composition bias toward basic and acidic residues. A compositionally biased stretch (polar residues) spans 342 to 351 (LSRQQDTHIP). A compositionally biased stretch (low complexity) spans 364–373 (AASKSASAKP). Over residues 374–389 (KAAKKAPKPRATKKKQ) the composition is skewed to basic residues. The span at 600–610 (QPQPAPPPPPS) shows a compositional bias: pro residues. Composition is skewed to low complexity over residues 655–666 (STAAQAAMSTSA), 775–787 (TTSPATRATRAKA), and 821–838 (PDSGSDDPFASSAPSSPD).

Belongs to the SLX4 family. Forms a heterodimer with SLX1. Phosphorylated in response to DNA damage.

The protein resides in the nucleus. Functionally, regulatory subunit of the SLX1-SLX4 structure-specific endonuclease that resolves DNA secondary structures generated during DNA repair and recombination. Has endonuclease activity towards branched DNA substrates, introducing single-strand cuts in duplex DNA close to junctions with ss-DNA. The sequence is that of Structure-specific endonuclease subunit SLX4 from Chaetomium globosum (strain ATCC 6205 / CBS 148.51 / DSM 1962 / NBRC 6347 / NRRL 1970) (Soil fungus).